The chain runs to 540 residues: Phosphoenolpyruvate carboxykinase (ATP) (540 aa).

Residue Arg-65 participates in substrate binding. Lys-87 carries the N6-acetyllysine modification. Residues Tyr-207 and Lys-213 each contribute to the substrate site. Residues Lys-213, His-232, and Gly-248 to Thr-256 contribute to the ATP site. Mn(2+) is bound by residues Lys-213 and His-232. Residue Asp-269 participates in Mn(2+) binding. ATP-binding positions include Glu-297, Arg-333, Arg-449–Ile-450, and Thr-455. Position 333 (Arg-333) interacts with substrate. Residue Lys-523 is modified to N6-acetyllysine.

Belongs to the phosphoenolpyruvate carboxykinase (ATP) family. In terms of assembly, monomer. Requires Mn(2+) as cofactor.

It is found in the cytoplasm. It carries out the reaction oxaloacetate + ATP = phosphoenolpyruvate + ADP + CO2. It functions in the pathway carbohydrate biosynthesis; gluconeogenesis. Involved in the gluconeogenesis. Catalyzes the conversion of oxaloacetate (OAA) to phosphoenolpyruvate (PEP) through direct phosphoryl transfer between the nucleoside triphosphate and OAA. This Escherichia coli O157:H7 protein is Phosphoenolpyruvate carboxykinase (ATP).